We begin with the raw amino-acid sequence, 545 residues long: Glucose-6-phosphate isomerase (545 aa).

Catalysis depends on glutamate 345, which acts as the Proton donor. Active-site residues include histidine 376 and lysine 514.

The protein belongs to the GPI family.

It localises to the cytoplasm. It carries out the reaction alpha-D-glucose 6-phosphate = beta-D-fructose 6-phosphate. It participates in carbohydrate biosynthesis; gluconeogenesis. Its pathway is carbohydrate degradation; glycolysis; D-glyceraldehyde 3-phosphate and glycerone phosphate from D-glucose: step 2/4. Its function is as follows. Catalyzes the reversible isomerization of glucose-6-phosphate to fructose-6-phosphate. The protein is Glucose-6-phosphate isomerase of Leptothrix cholodnii (strain ATCC 51168 / LMG 8142 / SP-6) (Leptothrix discophora (strain SP-6)).